Reading from the N-terminus, the 406-residue chain is Tryptophan 2,3-dioxygenase (406 aa).

Residue S19 is modified to Phosphoserine. Substrate contacts are provided by residues 72-76 (FIITH) and R144. H328 serves as a coordination point for heme. T342 provides a ligand contact to substrate.

It belongs to the tryptophan 2,3-dioxygenase family. Homotetramer. Dimer of dimers. It depends on heme as a cofactor. Liver.

It catalyses the reaction L-tryptophan + O2 = N-formyl-L-kynurenine. Its pathway is amino-acid degradation; L-tryptophan degradation via kynurenine pathway; L-kynurenine from L-tryptophan: step 1/2. Its function is as follows. Heme-dependent dioxygenase that catalyzes the oxidative cleavage of the L-tryptophan (L-Trp) pyrrole ring and converts L-tryptophan to N-formyl-L-kynurenine. Catalyzes the oxidative cleavage of the indole moiety. This is Tryptophan 2,3-dioxygenase from Rattus norvegicus (Rat).